The following is a 51-amino-acid chain: Ovomucoid (51 aa).

One can recognise a Kazal-like domain in the interval 3-51 (VDCSGYPKPDCTLESFPLCGSDNQTYSNKCAFCNAAVERNVTLRHLGEC). 3 disulfides stabilise this stretch: C5/C35, C13/C32, and C21/C51. N-linked (GlcNAc...) asparagine glycosylation occurs at N42.

Its subcellular location is the secreted. In Rhynchotus rufescens (Red-winged tinamou), this protein is Ovomucoid.